The sequence spans 342 residues: Nucleoid-associated protein Shewana3_2426 (342 aa).

The protein belongs to the YejK family.

Its subcellular location is the cytoplasm. It is found in the nucleoid. This chain is Nucleoid-associated protein Shewana3_2426, found in Shewanella sp. (strain ANA-3).